The chain runs to 335 residues: Cytochrome c biogenesis protein CcsA (335 aa).

8 consecutive transmembrane segments (helical) span residues F15–T35, W36–L56, L68–V88, L97–L117, V142–V162, I243–N263, W278–W298, and A304–L324.

The protein belongs to the CcmF/CycK/Ccl1/NrfE/CcsA family. As to quaternary structure, may interact with ccs1.

Its subcellular location is the cellular thylakoid membrane. Required during biogenesis of c-type cytochromes (cytochrome c6 and cytochrome f) at the step of heme attachment. In Crocosphaera subtropica (strain ATCC 51142 / BH68) (Cyanothece sp. (strain ATCC 51142)), this protein is Cytochrome c biogenesis protein CcsA.